Reading from the N-terminus, the 402-residue chain is Glutamyl-tRNA reductase (402 aa).

Substrate contacts are provided by residues threonine 48–arginine 51, serine 91, glutamate 96–glutamine 98, and glutamine 102. Residue cysteine 49 is the Nucleophile of the active site. Glycine 171–glycine 176 provides a ligand contact to NADP(+).

Belongs to the glutamyl-tRNA reductase family. As to quaternary structure, homodimer.

The catalysed reaction is (S)-4-amino-5-oxopentanoate + tRNA(Glu) + NADP(+) = L-glutamyl-tRNA(Glu) + NADPH + H(+). It participates in porphyrin-containing compound metabolism; protoporphyrin-IX biosynthesis; 5-aminolevulinate from L-glutamyl-tRNA(Glu): step 1/2. Functionally, catalyzes the NADPH-dependent reduction of glutamyl-tRNA(Glu) to glutamate 1-semialdehyde (GSA). In Methanothermobacter thermautotrophicus (strain ATCC 29096 / DSM 1053 / JCM 10044 / NBRC 100330 / Delta H) (Methanobacterium thermoautotrophicum), this protein is Glutamyl-tRNA reductase.